Consider the following 583-residue polypeptide: Atlastin-2 (583 aa).

Positions 1 to 44 (MAEGDEAARGQQPHQGLWRRRRTSDPSAAVNHVSSTTSLGENYE) are disordered. The segment at 1 to 60 (MAEGDEAARGQQPHQGLWRRRRTSDPSAAVNHVSSTTSLGENYEDDDLVNSDEVMKKPCP) is N-terminal hypervariable region (HVR). The Cytoplasmic segment spans residues 1–476 (MAEGDEAARG…NIFYAARTPA (476 aa)). Ser24 bears the Phosphoserine mark. The 246-residue stretch at 91–336 (DLNIVVVSVA…LVPLLLAPEN (246 aa)) folds into the GB1/RHD3-type G domain. 9 residues coordinate GDP: Arg104, Lys105, Gly106, Lys107, Ser108, Phe109, Gln175, Arg244, and Asp245. Residues Arg104, Lys105, Gly106, Lys107, Ser108, and Phe109 each contribute to the GTP site. Residue Ser108 participates in Mg(2+) binding. The GTP site is built by Arg244 and Asp245. The stretch at 256-284 (LEGGKQFLEKRLQVKQNQHEELQNVRKHI) forms a coiled coil. Lys270 bears the N6-methyllysine mark. GDP is bound by residues Val303 and Asn306. Val303 serves as a coordination point for GTP. The segment at 374-465 (MLQATAEANN…YANFIKHNDG (92 aa)) is 3HB (three-helix bundle) domain. Residues 466–474 (KNIFYAART) form a linker region. A helical membrane pass occupies residues 477–497 (TLFAVMFAMYIISGLTGFIGL). Residues 498 to 499 (NS) lie on the Lumenal side of the membrane. Residues 500–520 (IAVLCNLVMGLALIFLCTWAY) form a helical membrane-spanning segment. At 521-583 (VKYSGEFREI…VSHHARLKTD (63 aa)) the chain is on the cytoplasmic side. Residues 547–583 (KPLGDNLMEENIRQSVTNSIKAGLTDQVSHHARLKTD) are autoinhibitory domain.

The protein belongs to the TRAFAC class dynamin-like GTPase superfamily. GB1/RHD3 GTPase family. GB1 subfamily. As to quaternary structure, monomeric and homodimeric. The homodimer, transiently formed by two molecules on opposing membranes, is the active form mediating ER membrane fusion. Interacts with REEP5 and RTN3; these proteins are involved in endoplasmic reticulum tubular network organization. Interacts with ZFYVE27; both proteins are involved in endoplasmic reticulum tubular network organization. As to expression, expressed in peripheral tissues (at protein level).

Its subcellular location is the endoplasmic reticulum membrane. The enzyme catalyses GTP + H2O = GDP + phosphate + H(+). Its activity is regulated as follows. With its alternative C-terminus disrupting the autoinhibitory domain, this brain-specific isoform is probably more active at fusing ER membranes. Atlastin-2 (ATL2) is a membrane-anchored GTPase that mediates the GTP-dependent fusion of endoplasmic reticulum (ER) membranes, maintaining the continuous ER network. It facilitates the formation of three-way junctions where ER tubules intersect. Two atlastin-2 on neighboring ER tubules bind GTP and form loose homodimers through the GB1/RHD3-type G domains and 3HB regions. Upon GTP hydrolysis, the 3HB regions tighten, pulling the membranes together to drive their fusion. After fusion, the homodimer disassembles upon release of inorganic phosphate (Pi). Subsequently, GDP dissociates, resetting the monomers to a conformation ready for a new fusion cycle. This Homo sapiens (Human) protein is Atlastin-2.